The sequence spans 247 residues: tRNA uridine(34) hydroxylase (247 aa).

The 95-residue stretch at 124–218 folds into the Rhodanese domain; it reads TKQNVILIDT…YLEDTHNKNN (95 aa). C178 acts as the Cysteine persulfide intermediate in catalysis.

Belongs to the TrhO family.

It carries out the reaction uridine(34) in tRNA + AH2 + O2 = 5-hydroxyuridine(34) in tRNA + A + H2O. In terms of biological role, catalyzes oxygen-dependent 5-hydroxyuridine (ho5U) modification at position 34 in tRNAs. In Rickettsia prowazekii (strain Madrid E), this protein is tRNA uridine(34) hydroxylase.